Reading from the N-terminus, the 513-residue chain is MAKFEGYSEKQKSHQQYFVYPLLFQEYIYAFAHDYVLNGSEPVEIFGCNTKKFSSLLVKRLIIRMYQQNFWINSVNHPNQDRLLDHSNHFYSEFYSQILSEGFAIVVEIPFSLGQLSCPEEKEIPKFQNLRSIHSIFPFLEDKFLHLHYLSHIEIPYPIHFEILVQLLEYRIQDVPSLHLLRFFLNYYSNWNSLITSMKSIFLLKKENKRLSRFLYNSYVSEYEFFLLFLRKQSSCLRLTSSRTFLERIHFSRKMEHFGVMYPGFFRKTIWFFMDPLMHYVRYQRKVILASKGTLLLKKKWKSYLVNFSQYFFSFWTQPQRIRLNQLTNSCFDFLGYRSNVPINTFLVRNQMLENFILIDTRMKKFDTTAPGTPLIGSLAKAQFCTGSGHPISKPIWTDLSDWDILDRFGRICRNLFHYHSGSSKKQTLYRLKYILRLSCARTLARKHKSTVRTFMQRLGSVFLEEFFTEEEQVFSLMFAKTTHFSFHGSHSERIWYLDIIRIDDLVNPLTLN.

This sequence belongs to the intron maturase 2 family. MatK subfamily.

Its subcellular location is the plastid. The protein localises to the chloroplast. In terms of biological role, usually encoded in the trnK tRNA gene intron. Probably assists in splicing its own and other chloroplast group II introns. The protein is Maturase K of Cynodon dactylon (Bermuda grass).